The sequence spans 389 residues: Large ribosomal subunit protein uL3 (389 aa).

It belongs to the universal ribosomal protein uL3 family. Component of the large ribosomal subunit. Mature ribosomes consist of a small (40S) and a large (60S) subunit. The 40S subunit contains about 32 different proteins and 1 molecule of RNA (18S). The 60S subunit contains 45 different proteins and 3 molecules of RNA (25S, 5.8S and 5S).

It localises to the cytoplasm. Component of the ribosome, a large ribonucleoprotein complex responsible for the synthesis of proteins in the cell. The small ribosomal subunit (SSU) binds messenger RNAs (mRNAs) and translates the encoded message by selecting cognate aminoacyl-transfer RNA (tRNA) molecules. The large subunit (LSU) contains the ribosomal catalytic site termed the peptidyl transferase center (PTC), which catalyzes the formation of peptide bonds, thereby polymerizing the amino acids delivered by tRNAs into a polypeptide chain. The nascent polypeptides leave the ribosome through a tunnel in the LSU and interact with protein factors that function in enzymatic processing, targeting, and the membrane insertion of nascent chains at the exit of the ribosomal tunnel. RPL3 plays a role in coordinating processes of accommodating the aminoacyl-tRNA in the PTC. The polypeptide is Large ribosomal subunit protein uL3 (Candida albicans (strain SC5314 / ATCC MYA-2876) (Yeast)).